The following is a 380-amino-acid chain: Succinate--CoA ligase [ADP-forming] subunit beta (380 aa).

The 229-residue stretch at 9–237 (RDLLARFGIP…PSAEPEAERR (229 aa)) folds into the ATP-grasp domain. Residues lysine 45, 52-54 (GRG), valine 94, and glutamate 99 each bind ATP. Positions 192 and 206 each coordinate Mg(2+). Substrate is bound by residues asparagine 257 and 314–316 (GIT).

It belongs to the succinate/malate CoA ligase beta subunit family. As to quaternary structure, heterotetramer of two alpha and two beta subunits. Mg(2+) is required as a cofactor.

It catalyses the reaction succinate + ATP + CoA = succinyl-CoA + ADP + phosphate. It carries out the reaction GTP + succinate + CoA = succinyl-CoA + GDP + phosphate. It functions in the pathway carbohydrate metabolism; tricarboxylic acid cycle; succinate from succinyl-CoA (ligase route): step 1/1. In terms of biological role, succinyl-CoA synthetase functions in the citric acid cycle (TCA), coupling the hydrolysis of succinyl-CoA to the synthesis of either ATP or GTP and thus represents the only step of substrate-level phosphorylation in the TCA. The beta subunit provides nucleotide specificity of the enzyme and binds the substrate succinate, while the binding sites for coenzyme A and phosphate are found in the alpha subunit. The sequence is that of Succinate--CoA ligase [ADP-forming] subunit beta from Chloroflexus aurantiacus (strain ATCC 29366 / DSM 635 / J-10-fl).